Consider the following 427-residue polypeptide: Glutamyl-tRNA reductase (427 aa).

Residues 50–53, S110, 115–117, and Q121 contribute to the substrate site; these read TCNR and ETQ. The active-site Nucleophile is the C51. 190-195 is an NADP(+) binding site; that stretch reads GAGEMG.

This sequence belongs to the glutamyl-tRNA reductase family. As to quaternary structure, homodimer.

It catalyses the reaction (S)-4-amino-5-oxopentanoate + tRNA(Glu) + NADP(+) = L-glutamyl-tRNA(Glu) + NADPH + H(+). It participates in porphyrin-containing compound metabolism; protoporphyrin-IX biosynthesis; 5-aminolevulinate from L-glutamyl-tRNA(Glu): step 1/2. Catalyzes the NADPH-dependent reduction of glutamyl-tRNA(Glu) to glutamate 1-semialdehyde (GSA). In Campylobacter concisus (strain 13826), this protein is Glutamyl-tRNA reductase.